A 77-amino-acid polypeptide reads, in one-letter code: Small integral membrane protein 7 (77 aa).

The signal sequence occupies residues 1 to 17 (MIGDLLIFGTLLMNAGA). At 18–55 (VLNFKLKKRETQSQGFGDDSGSSSTGENIREFLLSLRY) the chain is on the extracellular side. The chain crosses the membrane as a helical span at residues 56–76 (FRIFIALWNIFMMFCMIVLFG). Ser-77 is a topological domain (cytoplasmic).

Belongs to the SMIM7 family.

The protein localises to the membrane. The sequence is that of Small integral membrane protein 7 (smim7) from Danio rerio (Zebrafish).